Reading from the N-terminus, the 548-residue chain is MKKVTAMLFSMAVGLNAVSMAAKAKASEEQETDVLLIGGGIMSATLGTYLRELEPEWSMTMVERLEGVAQESSNGWNNAGTGHSALMELNYTPQNADGSISIEKAVAINEAFQISRQFWAHQVERGVLRTPRSFINTVPHMSFVWGEDNVNFLRARYAALQQSSLFRGMRYSEDHAQIKEWAPLVMEGRDPQQKVAATRTEIGTDVNYGEITRQLIASLQKKSNFSLQLSSEVRALKRNDDNTWTVTVADLKNGTAQNIRAKFVFIGAGGAALKLLQESGIPEAKDYAGFPVGGQFLVSENPDVVNHHLAKVYGKASVGAPPMSVPHIDTRVLDGKRVVLFGPFATFSTKFLKNGSLWDLMSSTTTSNVMPMMHVGLDNFDLVKYLVSQVMLSEEDRFEALKEYYPQAKKEDWRLWQAGQRVQIIKRDADKGGVLRLGTEVVSDQQGTIAALLGASPGASTAAPIMLDLLEKVFGDRVSSPQWQATLKAIVPSYGRKLNGDVAATERELQYTSEVLGLKYDKPQAADSTPKPQLKPQPVQKEVADIAL.

The tract at residues 521-548 is disordered; that stretch reads DKPQAADSTPKPQLKPQPVQKEVADIAL. A compositionally biased stretch (low complexity) spans 530–541; it reads PKPQLKPQPVQK.

Belongs to the MQO family. FAD serves as cofactor.

The catalysed reaction is (S)-malate + a quinone = a quinol + oxaloacetate. The protein operates within carbohydrate metabolism; tricarboxylic acid cycle; oxaloacetate from (S)-malate (quinone route): step 1/1. This chain is Probable malate:quinone oxidoreductase, found in Shigella sonnei (strain Ss046).